The chain runs to 174 residues: WAP four-disulfide core domain protein 2 (174 aa).

The first 25 residues, 1 to 25 (MPACRLCLLAAGLLLGLLLFTPISA), serve as a signal peptide directing secretion. Residues 29-74 (DAEKPGECPQLEPITDCVLECTLDKDCADNRKCCQAGCSSVCSKPN) form the WAP 1 domain. Intrachain disulfides connect cysteine 36–cysteine 62, cysteine 45–cysteine 66, cysteine 49–cysteine 61, and cysteine 55–cysteine 70. The tract at residues 68-117 (SVCSKPNGPSEGELSGTDTKLSETGTTTQSAGLDHTTKPPGGQVSTKPPA) is disordered. Polar residues predominate over residues 83-98 (GTDTKLSETGTTTQSA). In terms of domain architecture, WAP 2 spans 125–173 (VREKQGTCPSVDIPKLGLCEDQCQVDSQCSGNMKCCRNGCGKMACTTPK). Intrachain disulfides connect cysteine 132-cysteine 160, cysteine 143-cysteine 164, cysteine 147-cysteine 159, and cysteine 153-cysteine 169.

Homotrimer; disulfide-linked.

The protein localises to the secreted. Its function is as follows. Broad range protease inhibitor. The polypeptide is WAP four-disulfide core domain protein 2 (Wfdc2) (Mus musculus (Mouse)).